The primary structure comprises 545 residues: Methionine--tRNA ligase (545 aa).

Residues 13 to 23 carry the 'HIGH' region motif; it reads PYANGPLHIGH. Zn(2+) contacts are provided by Cys144, Cys147, Cys157, and Cys160. A 'KMSKS' region motif is present at residues 330 to 334; it reads KISKS. Lys333 is a binding site for ATP.

Belongs to the class-I aminoacyl-tRNA synthetase family. MetG type 1 subfamily. Monomer. Requires Zn(2+) as cofactor.

It is found in the cytoplasm. It carries out the reaction tRNA(Met) + L-methionine + ATP = L-methionyl-tRNA(Met) + AMP + diphosphate. In terms of biological role, is required not only for elongation of protein synthesis but also for the initiation of all mRNA translation through initiator tRNA(fMet) aminoacylation. The polypeptide is Methionine--tRNA ligase (Blochmanniella floridana).